The sequence spans 72 residues: Probable movement protein p8 (72 aa).

A disordered region spans residues 16–58 (GRARSVEGKKHNGSGLTGVKRHAVSETSQKSQQGTGNGTMTNI). Residues 40 to 58 (SETSQKSQQGTGNGTMTNI) show a composition bias toward polar residues.

Belongs to the carmovirus/necrovirus/panicovirus movement protein p8 family.

In terms of biological role, cell-to-cell movement. The chain is Probable movement protein p8 from Tobacco necrosis virus (strain A) (TNV-A).